Here is a 443-residue protein sequence, read N- to C-terminus: Dynein regulatory complex protein 9 (443 aa).

Disordered stretches follow at residues 1-40 (MEEDSQEDSNLPPKVWHSEMTVSVTGKPPSTVEEDGLPKE) and 415-443 (GFKMPKDKVDSKDSKGKGKGKDKRRGKKK). The IQ domain maps to 393–422 (ELKSVIKLQAWWRGTMIRREIGGFKMPKDK). Residues 415–430 (GFKMPKDKVDSKDSKG) are compositionally biased toward basic and acidic residues. Positions 431–443 (KGKGKDKRRGKKK) are enriched in basic residues.

The protein belongs to the DRC9 family. Component of the nexin-dynein regulatory complex (N-DRC). Interacts (via IQ domain) with CALM when calcium levels are low. Does not interact with CALM in the presence of Ca(2+). Interacts with the HSP70 proteins HSPA1L and HSPA8. May form a complex with CAMK4 and HSP70.

It localises to the cytoplasm. The protein resides in the cell projection. It is found in the cilium. Its subcellular location is the flagellum. The protein localises to the cytoskeleton. It localises to the flagellum axoneme. In terms of biological role, component of the nexin-dynein regulatory complex (N-DRC), a key regulator of ciliary/flagellar motility which maintains the alignment and integrity of the distal axoneme and regulates microtubule sliding in motile axonemes. Binds calmodulin when cellular Ca(2+) levels are low and thereby contributes to the regulation of calcium and calmodulin-dependent protein kinase IV (CAMK4) activity; contributes to the regulation of CAMK4 signaling cascades. Required for normal axoneme assembly in sperm flagella, normal sperm tail formation and for male fertility. This chain is Dynein regulatory complex protein 9 (IQCG), found in Macaca fascicularis (Crab-eating macaque).